The following is a 765-amino-acid chain: LPS-assembly protein LptD (765 aa).

The first 18 residues, 1-18, serve as a signal peptide directing secretion; the sequence is MQIRYLLALSLLPKLVLA.

Belongs to the LptD family. Component of the lipopolysaccharide transport and assembly complex. Interacts with LptE and LptA.

The protein localises to the cell outer membrane. Together with LptE, is involved in the assembly of lipopolysaccharide (LPS) at the surface of the outer membrane. The polypeptide is LPS-assembly protein LptD (Shewanella oneidensis (strain ATCC 700550 / JCM 31522 / CIP 106686 / LMG 19005 / NCIMB 14063 / MR-1)).